The primary structure comprises 161 residues: MTLSIIVAHDKQRVIGYQNQLPWHLPNDLKHVKQLTTGNTLVMGRKTFNSIGKPLPNRRNVVLTNQASFHHEGVDVINSLDEIKELSGHVFIFGGQTLFEAMIDQVDDMYITVIDGKFQGDTFFPPYTFENWEVESSVEGQLDEKNTIPHTFLHLVRRKGK.

Residues Thr2–Arg157 form the DHFR domain. Residue Ile6–Ala8 participates in substrate binding. NADP(+)-binding positions include Val7–Ala8 and Ile15–Gln20. Asp28 provides a ligand contact to substrate. NADP(+) is bound at residue Gly44–Thr47. Arg58 contributes to the substrate binding site. Residues Leu63–Gln66 and Phe93–Leu98 contribute to the NADP(+) site. Substrate is bound at residue Thr112.

Belongs to the dihydrofolate reductase family.

It carries out the reaction (6S)-5,6,7,8-tetrahydrofolate + NADP(+) = 7,8-dihydrofolate + NADPH + H(+). It participates in cofactor biosynthesis; tetrahydrofolate biosynthesis; 5,6,7,8-tetrahydrofolate from 7,8-dihydrofolate: step 1/1. Its function is as follows. Key enzyme in folate metabolism. Catalyzes an essential reaction for de novo glycine and purine synthesis, and for DNA precursor synthesis. This is Dihydrofolate reductase (folA) from Staphylococcus epidermidis.